We begin with the raw amino-acid sequence, 261 residues long: Pyridoxine 5'-phosphate synthase (261 aa).

Residue Asn6 coordinates 3-amino-2-oxopropyl phosphate. 8-9 (DH) serves as a coordination point for 1-deoxy-D-xylulose 5-phosphate. Arg17 contributes to the 3-amino-2-oxopropyl phosphate binding site. His42 serves as the catalytic Proton acceptor. Residues Arg44 and His49 each coordinate 1-deoxy-D-xylulose 5-phosphate. Glu69 functions as the Proton acceptor in the catalytic mechanism. Thr99 lines the 1-deoxy-D-xylulose 5-phosphate pocket. Catalysis depends on His213, which acts as the Proton donor. 3-amino-2-oxopropyl phosphate-binding positions include Gly214 and 235 to 236 (GQ).

This sequence belongs to the PNP synthase family. In terms of assembly, homooctamer; tetramer of dimers.

The protein localises to the cytoplasm. It carries out the reaction 3-amino-2-oxopropyl phosphate + 1-deoxy-D-xylulose 5-phosphate = pyridoxine 5'-phosphate + phosphate + 2 H2O + H(+). It participates in cofactor biosynthesis; pyridoxine 5'-phosphate biosynthesis; pyridoxine 5'-phosphate from D-erythrose 4-phosphate: step 5/5. Its function is as follows. Catalyzes the complicated ring closure reaction between the two acyclic compounds 1-deoxy-D-xylulose-5-phosphate (DXP) and 3-amino-2-oxopropyl phosphate (1-amino-acetone-3-phosphate or AAP) to form pyridoxine 5'-phosphate (PNP) and inorganic phosphate. This chain is Pyridoxine 5'-phosphate synthase, found in Aliarcobacter butzleri (strain RM4018) (Arcobacter butzleri).